The primary structure comprises 535 residues: CTP synthase (535 aa).

The tract at residues methionine 1–isoleucine 266 is amidoligase domain. A CTP-binding site is contributed by serine 14. UTP is bound at residue serine 14. Residues serine 15 to leucine 20 and aspartate 72 each bind ATP. Mg(2+)-binding residues include aspartate 72 and glutamate 140. CTP is bound by residues aspartate 147 to glutamate 149, lysine 187 to glutamine 192, and lysine 223. Residues lysine 187–glutamine 192 and lysine 223 contribute to the UTP site. The Glutamine amidotransferase type-1 domain occupies arginine 292–alanine 534. L-glutamine is bound at residue glycine 354. The Nucleophile; for glutamine hydrolysis role is filled by cysteine 381. L-glutamine contacts are provided by residues leucine 382–glutamine 385, glutamate 405, and arginine 462. Active-site residues include histidine 507 and glutamate 509.

The protein belongs to the CTP synthase family. As to quaternary structure, homotetramer.

The enzyme catalyses UTP + L-glutamine + ATP + H2O = CTP + L-glutamate + ADP + phosphate + 2 H(+). The catalysed reaction is L-glutamine + H2O = L-glutamate + NH4(+). It carries out the reaction UTP + NH4(+) + ATP = CTP + ADP + phosphate + 2 H(+). The protein operates within pyrimidine metabolism; CTP biosynthesis via de novo pathway; CTP from UDP: step 2/2. Allosterically activated by GTP, when glutamine is the substrate; GTP has no effect on the reaction when ammonia is the substrate. The allosteric effector GTP functions by stabilizing the protein conformation that binds the tetrahedral intermediate(s) formed during glutamine hydrolysis. Inhibited by the product CTP, via allosteric rather than competitive inhibition. Its function is as follows. Catalyzes the ATP-dependent amination of UTP to CTP with either L-glutamine or ammonia as the source of nitrogen. Regulates intracellular CTP levels through interactions with the four ribonucleotide triphosphates. The polypeptide is CTP synthase (Pelobacter propionicus (strain DSM 2379 / NBRC 103807 / OttBd1)).